We begin with the raw amino-acid sequence, 225 residues long: GTP cyclohydrolase 1 (225 aa).

The segment covering 1–12 has biased composition (basic and acidic residues); sequence MERSKQSHDNQA. Residues 1–59 are disordered; that stretch reads MERSKQSHDNQADSRPTTNESSLNGHFDGLVKKTPGMWDVKGRGTAGESSSHTGSSVVE. 2 stretches are compositionally biased toward polar residues: residues 13-24 and 47-58; these read DSRPTTNESSLN and GESSSHTGSSVV. Cys149, His152, and Cys220 together coordinate Zn(2+).

The protein belongs to the GTP cyclohydrolase I family. As to quaternary structure, toroid-shaped homodecamer, composed of two pentamers of five dimers.

The protein resides in the cytoplasm. The protein localises to the nucleus. The catalysed reaction is GTP + H2O = 7,8-dihydroneopterin 3'-triphosphate + formate + H(+). The protein operates within cofactor biosynthesis; 7,8-dihydroneopterin triphosphate biosynthesis; 7,8-dihydroneopterin triphosphate from GTP: step 1/1. GTP shows a positive allosteric effect, and tetrahydrobiopterin inhibits the enzyme activity. Zinc is required for catalytic activity. Inhibited by Mg(2+). Functionally, may positively regulate nitric oxide synthesis in endothelial cells. May be involved in dopamine synthesis. May modify pain sensitivity and persistence. The chain is GTP cyclohydrolase 1 (gch1) from Oncorhynchus mykiss (Rainbow trout).